The chain runs to 383 residues: Probable L-aspartate decarboxylase (383 aa).

Lys-231 is modified (N6-(pyridoxal phosphate)lysine).

Belongs to the group II decarboxylase family. MfnA subfamily. It depends on pyridoxal 5'-phosphate as a cofactor.

It carries out the reaction L-aspartate + H(+) = beta-alanine + CO2. Its pathway is cofactor biosynthesis; coenzyme A biosynthesis. In terms of biological role, catalyzes the decarboxylation of L-aspartate to produce beta-alanine. The protein is Probable L-aspartate decarboxylase of Thermococcus gammatolerans (strain DSM 15229 / JCM 11827 / EJ3).